Consider the following 467-residue polypeptide: ATP-dependent protease ATPase subunit HslU (467 aa).

ATP contacts are provided by residues Ile-18, 60–65 (GVGKTE), Asp-280, Glu-345, and Arg-417.

The protein belongs to the ClpX chaperone family. HslU subfamily. In terms of assembly, a double ring-shaped homohexamer of HslV is capped on each side by a ring-shaped HslU homohexamer. The assembly of the HslU/HslV complex is dependent on binding of ATP.

Its subcellular location is the cytoplasm. Its function is as follows. ATPase subunit of a proteasome-like degradation complex; this subunit has chaperone activity. The binding of ATP and its subsequent hydrolysis by HslU are essential for unfolding of protein substrates subsequently hydrolyzed by HslV. HslU recognizes the N-terminal part of its protein substrates and unfolds these before they are guided to HslV for hydrolysis. In Lactobacillus helveticus (strain DPC 4571), this protein is ATP-dependent protease ATPase subunit HslU.